Reading from the N-terminus, the 203-residue chain is dCTP deaminase (203 aa).

DCTP contacts are provided by residues 105-110 (RSSLGR), aspartate 123, 131-133 (TLE), glutamine 152, tyrosine 166, lysine 173, and glutamine 177. Glutamate 133 serves as the catalytic Proton donor/acceptor. The disordered stretch occupies residues 164 to 203 (RPYGVERGSKYQDQDGPQASRIGSDPEFHSDENQAAEHES). Basic and acidic residues predominate over residues 166-176 (YGVERGSKYQD). Over residues 187–203 (SDPEFHSDENQAAEHES) the composition is skewed to basic and acidic residues.

It belongs to the dCTP deaminase family. As to quaternary structure, homotrimer.

It catalyses the reaction dCTP + H2O + H(+) = dUTP + NH4(+). It participates in pyrimidine metabolism; dUMP biosynthesis; dUMP from dCTP (dUTP route): step 1/2. Catalyzes the deamination of dCTP to dUTP. This Halorubrum lacusprofundi (strain ATCC 49239 / DSM 5036 / JCM 8891 / ACAM 34) protein is dCTP deaminase.